A 400-amino-acid polypeptide reads, in one-letter code: MSERVILAYSGGLDTSVAISWIGKETGKEVVAVAIDLGQGGEDMEVVRQRAIDCGAVEAVVVDARDEFAEQYCLPAIQSNALYMDRYPLVSALSRPLIVKHLVDAAREHGGGIVAHGCTGKGNDQVRFEVGFASLAPDLKVLAPVRDYAWTREKAIAFAEENAIPINVTKRSPFSIDQNVWGRAVETGFLEHLWNAPTKDVYDYTEDPTVNWSSPDEVVVGFEKGVPVSIDGNPVTVLQAIEQLNERAGAQGVGRLDVVEDRLVGIKSREIYEAPGAMVLITAHTELEHVTLERELGRYKRLTDQKWGELVYDGLWFSPLKSALESFVANTQEHVSGEIRLVLHGGHIAVNGRRSSESLYDFNLATYDEGDTFDQSSAKGFVHVHGLSSSLSARRDLAGK.

Residue A8 to S16 participates in ATP binding. Y87 provides a ligand contact to L-citrulline. Residue G117 coordinates ATP. T119, N123, and D124 together coordinate L-aspartate. N123 serves as a coordination point for L-citrulline. L-citrulline contacts are provided by R127, S175, E260, and Y272.

This sequence belongs to the argininosuccinate synthase family. Type 1 subfamily. As to quaternary structure, homotetramer.

The protein localises to the cytoplasm. It carries out the reaction L-citrulline + L-aspartate + ATP = 2-(N(omega)-L-arginino)succinate + AMP + diphosphate + H(+). Its pathway is amino-acid biosynthesis; L-arginine biosynthesis; L-arginine from L-ornithine and carbamoyl phosphate: step 2/3. In Mycolicibacterium gilvum (strain PYR-GCK) (Mycobacterium gilvum (strain PYR-GCK)), this protein is Argininosuccinate synthase.